The following is a 359-amino-acid chain: Maleylacetate reductase 2 (359 aa).

Belongs to the iron-containing alcohol dehydrogenase family. As to quaternary structure, homodimer.

It catalyses the reaction 3-oxoadipate + NAD(+) = maleylacetate + NADH + H(+). It carries out the reaction 3-oxoadipate + NADP(+) = maleylacetate + NADPH + H(+). Its pathway is aromatic compound metabolism; 3-chlorocatechol degradation. Inhibited by p-chloromercuribenzoate and by 3-oxoadipate, and, in a temperature-dependent manner, by manganese. Functionally, plays a major role in the degradation of chloroaromatic compounds by channeling maleylacetate and some of its substituted derivatives into the 3-oxoadipate pathway. This enzyme converts maleylacetate and 2-chloromaleylacetate with similar efficiencies. NADH is preferred to NADPH as the cosubstrate. The sequence is that of Maleylacetate reductase 2 (tfdFII) from Cupriavidus pinatubonensis (strain JMP 134 / LMG 1197) (Cupriavidus necator (strain JMP 134)).